The sequence spans 363 residues: Protein-glutamate methylesterase/protein-glutamine glutaminase 2 (363 aa).

Residues 6 to 123 enclose the Response regulatory domain; it reads RVLIVDDSAS…AQFLLESKIH (118 aa). Position 57 is a 4-aspartylphosphate (Asp57). Residues 172–363 enclose the CheB-type methylesterase domain; the sequence is ARTTESVICI…AMEILRAGNR (192 aa). Active-site residues include Ser184, His210, and Asp306.

It belongs to the CheB family. In terms of processing, phosphorylated by CheA. Phosphorylation of the N-terminal regulatory domain activates the methylesterase activity.

The protein localises to the cytoplasm. It catalyses the reaction [protein]-L-glutamate 5-O-methyl ester + H2O = L-glutamyl-[protein] + methanol + H(+). The catalysed reaction is L-glutaminyl-[protein] + H2O = L-glutamyl-[protein] + NH4(+). Functionally, involved in chemotaxis. Part of a chemotaxis signal transduction system that modulates chemotaxis in response to various stimuli. Catalyzes the demethylation of specific methylglutamate residues introduced into the chemoreceptors (methyl-accepting chemotaxis proteins or MCP) by CheR. Also mediates the irreversible deamidation of specific glutamine residues to glutamic acid. This chain is Protein-glutamate methylesterase/protein-glutamine glutaminase 2, found in Rhodospirillum rubrum (strain ATCC 11170 / ATH 1.1.1 / DSM 467 / LMG 4362 / NCIMB 8255 / S1).